Consider the following 631-residue polypeptide: Interferon-induced GTP-binding protein Mx1 (631 aa).

The Dynamin-type G domain maps to 33–306 (DLALPAIAVI…LTSHICKSLP (274 aa)). The segment at 43–50 (GDQSSGKS) is G1 motif. A GTP-binding site is contributed by 43-50 (GDQSSGKS). The G2 motif stretch occupies residues 68–70 (VTR). The segment at 144 to 147 (DLPG) is G3 motif. GTP is bound by residues 144–148 (DLPGI) and 213–216 (TKPD). Residues 213-216 (TKPD) are G4 motif. Residues 245–248 (KCRG) are G5 motif. The bundle signaling element (BSE) stretch occupies residues 307–332 (LLEDQINSSHQSASEELQKYGADIPE). The segment at 332–499 (EDDRTRMSFL…HFQMEQIVYC (168 aa)) is middle domain. The tract at residues 333–601 (DDRTRMSFLV…TSKCSWFLEE (269 aa)) is stalk. Positions 520–522 (KTK) are critical for lipid-binding. The GED domain maps to 543 to 631 (TTEMTQHLKA…ARQKLAKFSD (89 aa)).

It belongs to the TRAFAC class dynamin-like GTPase superfamily. Dynamin/Fzo/YdjA family. As to quaternary structure, homooligomer. Oligomerizes into multimeric filamentous or ring-like structures by virtue of its stalk domain. Oligomerization is critical for GTPase activity, protein stability, and recognition of viral target structures. Interacts with TRPC1, TRPC3, TRPC4, TRPC5, TRPC6 and TRPC7. Interacts with HSPA5. Interacts with TUBB/TUBB5. Interacts with DDX39A and DDX39B. ISGylated.

The protein localises to the cytoplasm. It localises to the nucleus. It is found in the endoplasmic reticulum membrane. Its subcellular location is the perinuclear region. In terms of biological role, interferon-induced dynamin-like GTPase with antiviral activity against influenza A virus, (IAV), influenza B virus (IBV) and Thogoto virus (THOV). Inhibits FLUAV by interfering with the process of primary transcription, probably by affecting the viral polymerase function. In Mus musculus (Mouse), this protein is Interferon-induced GTP-binding protein Mx1 (Mx1).